The following is a 40-amino-acid chain: Photosystem II reaction center protein J (40 aa).

The helical transmembrane segment at 8-28 (IPLWLIGTVTGIPVIGSMGIF) threads the bilayer.

This sequence belongs to the PsbJ family. As to quaternary structure, PSII is composed of 1 copy each of membrane proteins PsbA, PsbB, PsbC, PsbD, PsbE, PsbF, PsbH, PsbI, PsbJ, PsbK, PsbL, PsbM, PsbT, PsbX, PsbY, PsbZ, Psb30/Ycf12, at least 3 peripheral proteins of the oxygen-evolving complex and a large number of cofactors. It forms dimeric complexes.

The protein resides in the plastid. Its subcellular location is the chloroplast thylakoid membrane. In terms of biological role, one of the components of the core complex of photosystem II (PSII). PSII is a light-driven water:plastoquinone oxidoreductase that uses light energy to abstract electrons from H(2)O, generating O(2) and a proton gradient subsequently used for ATP formation. It consists of a core antenna complex that captures photons, and an electron transfer chain that converts photonic excitation into a charge separation. The protein is Photosystem II reaction center protein J of Illicium oligandrum (Star anise).